The sequence spans 267 residues: Diphthine--ammonia ligase (267 aa).

Position 97 is a phosphotyrosine (Y97).

The protein belongs to the Diphthine--ammonia ligase family.

It carries out the reaction diphthine-[translation elongation factor 2] + NH4(+) + ATP = diphthamide-[translation elongation factor 2] + AMP + diphosphate + H(+). It functions in the pathway protein modification; peptidyl-diphthamide biosynthesis. Functionally, amidase that catalyzes the last step of diphthamide biosynthesis using ammonium and ATP. Diphthamide biosynthesis consists in the conversion of an L-histidine residue in the translation elongation factor eEF-2 (EEF2) to diphthamide. The chain is Diphthine--ammonia ligase (Dph6) from Rattus norvegicus (Rat).